A 62-amino-acid polypeptide reads, in one-letter code: Large ribosomal subunit protein uL30 (62 aa).

The protein belongs to the universal ribosomal protein uL30 family. As to quaternary structure, part of the 50S ribosomal subunit.

The sequence is that of Large ribosomal subunit protein uL30 from Halalkalibacterium halodurans (strain ATCC BAA-125 / DSM 18197 / FERM 7344 / JCM 9153 / C-125) (Bacillus halodurans).